Consider the following 263-residue polypeptide: Heat-labile enterotoxin IIB, A chain (263 aa).

A signal peptide spans 1–20 (MAKVISFFISLFLISFPLYA). An NAD(+)-binding site is contributed by 26-39 (ADSRTPDEVRRSGG). Glu-130 is a catalytic residue. An intrachain disulfide couples Cys-205 to Cys-217.

The protein belongs to the enterotoxin A family. As to quaternary structure, heterohexamer of one A chain and of five B chains.

Its function is as follows. The biological activity of the toxin is produced by the A chain, which activates intracellular adenyl cyclase. This Escherichia coli protein is Heat-labile enterotoxin IIB, A chain.